The sequence spans 173 residues: Translocon-associated protein subunit delta (173 aa).

Positions 1-23 (MAAMASFGALALLLLSGLSCCSA) are cleaved as a signal peptide. Topologically, residues 24 to 144 (EACLEPQITP…SVDHRGTWNG (121 aa)) are lumenal. Cys-26 and Cys-57 are joined by a disulfide. A Glycyl lysine isopeptide (Lys-Gly) (interchain with G-Cter in ubiquitin) cross-link involves residue Lys-73. A helical transmembrane segment spans residues 145-165 (PWVSTEVLAAAIGIVIYYLAF). The Cytoplasmic portion of the chain corresponds to 166 to 173 (SAKSHIQA).

This sequence belongs to the TRAP-delta family. In terms of assembly, heterotetramer of TRAP-alpha, TRAP-beta, TRAP-delta and TRAP-gamma.

It localises to the endoplasmic reticulum membrane. Its function is as follows. TRAP proteins are part of a complex whose function is to bind calcium to the ER membrane and thereby regulate the retention of ER resident proteins. This Rattus norvegicus (Rat) protein is Translocon-associated protein subunit delta (Ssr4).